The sequence spans 137 residues: Large ribosomal subunit protein uL16 (137 aa).

Belongs to the universal ribosomal protein uL16 family. In terms of assembly, part of the 50S ribosomal subunit.

Functionally, binds 23S rRNA and is also seen to make contacts with the A and possibly P site tRNAs. In Chelativorans sp. (strain BNC1), this protein is Large ribosomal subunit protein uL16.